The sequence spans 212 residues: Uridine kinase (212 aa).

13 to 20 lines the ATP pocket; that stretch reads GASASGKS.

It belongs to the uridine kinase family.

The protein localises to the cytoplasm. It carries out the reaction uridine + ATP = UMP + ADP + H(+). The enzyme catalyses cytidine + ATP = CMP + ADP + H(+). It functions in the pathway pyrimidine metabolism; CTP biosynthesis via salvage pathway; CTP from cytidine: step 1/3. The protein operates within pyrimidine metabolism; UMP biosynthesis via salvage pathway; UMP from uridine: step 1/1. The protein is Uridine kinase of Shewanella oneidensis (strain ATCC 700550 / JCM 31522 / CIP 106686 / LMG 19005 / NCIMB 14063 / MR-1).